Here is a 214-residue protein sequence, read N- to C-terminus: Octanoyltransferase (214 aa).

The region spanning 35–211 is the BPL/LPL catalytic domain; the sequence is KSNMNFIWLG…IIHEEFNFNF (177 aa). Residues 75–82, 142–144, and 155–157 contribute to the substrate site; these read RGGEVTCH, SIG, and GFS. The active-site Acyl-thioester intermediate is the cysteine 173.

The protein belongs to the LipB family.

Its subcellular location is the cytoplasm. The catalysed reaction is octanoyl-[ACP] + L-lysyl-[protein] = N(6)-octanoyl-L-lysyl-[protein] + holo-[ACP] + H(+). Its pathway is protein modification; protein lipoylation via endogenous pathway; protein N(6)-(lipoyl)lysine from octanoyl-[acyl-carrier-protein]: step 1/2. Functionally, catalyzes the transfer of endogenously produced octanoic acid from octanoyl-acyl-carrier-protein onto the lipoyl domains of lipoate-dependent enzymes. Lipoyl-ACP can also act as a substrate although octanoyl-ACP is likely to be the physiological substrate. In Prochlorococcus marinus subsp. pastoris (strain CCMP1986 / NIES-2087 / MED4), this protein is Octanoyltransferase.